Consider the following 592-residue polypeptide: Putative D-/L-hydantoinase subunit B (592 aa).

It belongs to the HyuB family. May form a complex with HyuA.

Functionally, involved in the asymmetric conversion of racemic 5-substituted hydantoins to the corresponding L-amino acids. HyuA and HyuB are both required for the conversion of D- and L-5-substituted hydantoins to corresponding N-carbamoyl-D- and N-carbamoyl-L-amino acids, respectively. This Pseudomonas sp. (strain NS671) protein is Putative D-/L-hydantoinase subunit B.